The primary structure comprises 178 residues: Dual-action ribosomal maturation protein DarP (178 aa).

The span at 1-14 (MTVSDHPQTVSQPD) shows a compositional bias: polar residues. The interval 1 to 25 (MTVSDHPQTVSQPDPESESRPSKTR) is disordered.

Belongs to the DarP family.

It is found in the cytoplasm. Functionally, member of a network of 50S ribosomal subunit biogenesis factors which assembles along the 30S-50S interface, preventing incorrect 23S rRNA structures from forming. Promotes peptidyl transferase center (PTC) maturation. The chain is Dual-action ribosomal maturation protein DarP from Nitrosomonas europaea (strain ATCC 19718 / CIP 103999 / KCTC 2705 / NBRC 14298).